We begin with the raw amino-acid sequence, 138 residues long: Putative pre-16S rRNA nuclease (138 aa).

It belongs to the YqgF nuclease family.

It is found in the cytoplasm. Could be a nuclease involved in processing of the 5'-end of pre-16S rRNA. The protein is Putative pre-16S rRNA nuclease of Glaesserella parasuis serovar 5 (strain SH0165) (Haemophilus parasuis).